Here is a 268-residue protein sequence, read N- to C-terminus: Phosphate import ATP-binding protein PstB 2 (268 aa).

Residues 22 to 263 enclose the ABC transporter domain; it reads MALTGVNFYY…PKVKRTEDYI (242 aa). Position 54 to 61 (54 to 61) interacts with ATP; it reads GPSGCGKS.

The protein belongs to the ABC transporter superfamily. Phosphate importer (TC 3.A.1.7) family. The complex is composed of two ATP-binding proteins (PstB), two transmembrane proteins (PstC and PstA) and a solute-binding protein (PstS).

The protein resides in the cell inner membrane. It carries out the reaction phosphate(out) + ATP + H2O = ADP + 2 phosphate(in) + H(+). Functionally, part of the ABC transporter complex PstSACB involved in phosphate import. Responsible for energy coupling to the transport system. This chain is Phosphate import ATP-binding protein PstB 2, found in Rhizobium johnstonii (strain DSM 114642 / LMG 32736 / 3841) (Rhizobium leguminosarum bv. viciae).